We begin with the raw amino-acid sequence, 340 residues long: Selenide, water dikinase (340 aa).

Sec-17 is an active-site residue. Residue Sec-17 is a non-standard amino acid, selenocysteine. ATP contacts are provided by residues Lys-20 and 45 to 47; that span reads NNE. Residue Asp-48 participates in Mg(2+) binding. ATP contacts are provided by residues Asp-65, Asp-88, and 136-138; that span reads GHT. Asp-88 lines the Mg(2+) pocket. Asp-224 is a Mg(2+) binding site.

It belongs to the selenophosphate synthase 1 family. Class I subfamily. As to quaternary structure, homodimer. It depends on Mg(2+) as a cofactor.

It catalyses the reaction hydrogenselenide + ATP + H2O = selenophosphate + AMP + phosphate + 2 H(+). Synthesizes selenophosphate from selenide and ATP. This chain is Selenide, water dikinase, found in Campylobacter jejuni subsp. jejuni serotype O:2 (strain ATCC 700819 / NCTC 11168).